The chain runs to 317 residues: Transaldolase (317 aa).

Lys-132 functions as the Schiff-base intermediate with substrate in the catalytic mechanism.

Belongs to the transaldolase family. Type 1 subfamily. Homodimer.

It is found in the cytoplasm. The enzyme catalyses D-sedoheptulose 7-phosphate + D-glyceraldehyde 3-phosphate = D-erythrose 4-phosphate + beta-D-fructose 6-phosphate. It functions in the pathway carbohydrate degradation; pentose phosphate pathway; D-glyceraldehyde 3-phosphate and beta-D-fructose 6-phosphate from D-ribose 5-phosphate and D-xylulose 5-phosphate (non-oxidative stage): step 2/3. In terms of biological role, transaldolase is important for the balance of metabolites in the pentose-phosphate pathway. This is Transaldolase (talB) from Escherichia coli O104:H4 (strain 2009EL-2071).